A 432-amino-acid chain; its full sequence is Adenylosuccinate synthetase (432 aa).

GTP is bound by residues Gly12–Lys18 and Gly40–Thr42. Asp13 serves as the catalytic Proton acceptor. The Mg(2+) site is built by Asp13 and Gly40. IMP-binding positions include Asp13 to Lys16, Asn38 to His41, Thr132, Arg146, Gln226, Thr241, and Arg305. His41 serves as the catalytic Proton donor. A substrate-binding site is contributed by Thr301–Arg307. GTP contacts are provided by residues Arg307, Lys333–Asp335, and Ser415–Ser417.

The protein belongs to the adenylosuccinate synthetase family. Homodimer. It depends on Mg(2+) as a cofactor.

The protein resides in the cytoplasm. The catalysed reaction is IMP + L-aspartate + GTP = N(6)-(1,2-dicarboxyethyl)-AMP + GDP + phosphate + 2 H(+). Its pathway is purine metabolism; AMP biosynthesis via de novo pathway; AMP from IMP: step 1/2. Plays an important role in the de novo pathway of purine nucleotide biosynthesis. Catalyzes the first committed step in the biosynthesis of AMP from IMP. This Agrobacterium fabrum (strain C58 / ATCC 33970) (Agrobacterium tumefaciens (strain C58)) protein is Adenylosuccinate synthetase.